The following is a 564-amino-acid chain: Dicarboxylate transporter 2, chloroplastic (564 aa).

Residues 1–22 (MESLALLPTLSLSTTTTTSKAT) constitute a chloroplast transit peptide. Residues 35–58 (RRPHLSLSLSSTPKPTLTFSSHSH) are disordered. The segment covering 39-58 (LSLSLSSTPKPTLTFSSHSH) has biased composition (low complexity). The next 12 helical transmembrane spans lie at 94-114 (GAKL…RFAV), 127-147 (LLAI…PVGA), 166-186 (TAFC…FFFA), 235-255 (AGGI…SLPG), 262-282 (LGTY…ALFL), 307-327 (VFWL…TPLI), 356-376 (VTKN…LWVF), 380-400 (IGVS…LLGV), 415-435 (TLAW…LGIV), 451-471 (LSWP…HYLF), 484-504 (AFLA…LALA), and 538-558 (MGFI…GVWW).

It belongs to the SLC13A/DASS transporter (TC 2.A.47) family. DIT1 subfamily. As to expression, expressed in leaves.

The protein localises to the plastid. The protein resides in the chloroplast inner membrane. In terms of biological role, glutamate/malate translocator involved with DIT1 in primary ammonia assimilation and in the re-assimilation of ammonia generated by the photorespiratory pathway. Exports the end product of ammonia assimilation, glutamate, from plastids to the cytosol. The precursor for ammonia assimilation, 2-oxoglutarate, is imported from the cytosol by DIT1. The polypeptide is Dicarboxylate transporter 2, chloroplastic (DIT2) (Spinacia oleracea (Spinach)).